The chain runs to 1372 residues: DNA-directed RNA polymerase subunit beta (1372 aa).

The protein belongs to the RNA polymerase beta chain family. The RNAP catalytic core consists of 2 alpha, 1 beta, 1 beta' and 1 omega subunit. When a sigma factor is associated with the core the holoenzyme is formed, which can initiate transcription.

It catalyses the reaction RNA(n) + a ribonucleoside 5'-triphosphate = RNA(n+1) + diphosphate. In terms of biological role, DNA-dependent RNA polymerase catalyzes the transcription of DNA into RNA using the four ribonucleoside triphosphates as substrates. This is DNA-directed RNA polymerase subunit beta from Bradyrhizobium sp. (strain ORS 278).